A 706-amino-acid chain; its full sequence is Lysophospholipase 2 (706 aa).

The first 19 residues, 1 to 19, serve as a signal peptide directing secretion; sequence MQLRNILQASSLISGLSLA. The PLA2c domain maps to 36–588; the sequence is PCPSDDTSLV…ADYCWNGTLS (553 aa). N-linked (GlcNAc...) asparagine glycosylation is found at asparagine 47, asparagine 80, asparagine 94, asparagine 125, asparagine 162, asparagine 181, asparagine 193, asparagine 217, asparagine 279, asparagine 309, asparagine 365, asparagine 390, asparagine 491, asparagine 515, asparagine 524, asparagine 543, asparagine 567, asparagine 584, asparagine 598, asparagine 630, asparagine 634, asparagine 642, asparagine 648, asparagine 652, and asparagine 658. Residues 627–672 are disordered; that stretch reads TSGNTTSNSTTSTSSNVTSNSNSSSNTTLNSNSSSSSISSSTARSS. Asparagine 680 is lipidated: GPI-anchor amidated asparagine. The propeptide at 681 to 706 is removed in mature form; sequence AAAISYANTNTLMSLLGAITALFGLI.

This sequence belongs to the lysophospholipase family. The GPI-anchor is attached to the protein in the endoplasmic reticulum and serves to target the protein to the cell surface. There, the glucosamine-inositol phospholipid moiety is cleaved off and the GPI-modified mannoprotein is covalently attached via its lipidless GPI glycan remnant to the 1,6-beta-glucan of the outer cell wall layer.

Its subcellular location is the secreted. The protein localises to the cell wall. It is found in the membrane. The catalysed reaction is a 1-acyl-sn-glycero-3-phosphocholine + H2O = sn-glycerol 3-phosphocholine + a fatty acid + H(+). The enzyme catalyses 1-hexadecanoyl-sn-glycero-3-phosphoethanolamine + H2O = sn-glycero-3-phosphoethanolamine + hexadecanoate + H(+). It catalyses the reaction 1-hexadecanoyl-sn-glycero-3-phosphocholine + H2O = sn-glycerol 3-phosphocholine + hexadecanoate + H(+). It carries out the reaction 1-hexadecanoyl-sn-glycero-3-phospho-L-serine + H2O = sn-glycero-3-phospho-L-serine + hexadecanoate + H(+). The catalysed reaction is 1,2-dihexadecanoyl-sn-glycero-3-phosphocholine + H2O = 1-hexadecanoyl-sn-glycero-3-phosphocholine + hexadecanoate + H(+). Its function is as follows. Sequentially removes both fatty acyl groups from diacylglycerophospholipids and therefore has both phospholipase A and lysophospholipase activities. However, it does not display transacylase activity. Substrate preference is phosphatidylserine &gt; phosphatidylinositol &gt; phosphatidylcholine &gt; phosphatidylethanolamine. The substrate specificity is pH- and ion-dependent. In contrast with activities observed at optimum pH 3.5, the order of substrate preference at pH 5.5 is phosphatidylserine = phosphatidylethanolamine &gt; phosphatidylcholine &gt; phosphatidylinositol. In Saccharomyces cerevisiae (strain ATCC 204508 / S288c) (Baker's yeast), this protein is Lysophospholipase 2 (PLB2).